A 177-amino-acid polypeptide reads, in one-letter code: ATP synthase subunit delta (177 aa).

It belongs to the ATPase delta chain family. F-type ATPases have 2 components, F(1) - the catalytic core - and F(0) - the membrane proton channel. F(1) has five subunits: alpha(3), beta(3), gamma(1), delta(1), epsilon(1). F(0) has three main subunits: a(1), b(2) and c(10-14). The alpha and beta chains form an alternating ring which encloses part of the gamma chain. F(1) is attached to F(0) by a central stalk formed by the gamma and epsilon chains, while a peripheral stalk is formed by the delta and b chains.

It localises to the cell inner membrane. Its function is as follows. F(1)F(0) ATP synthase produces ATP from ADP in the presence of a proton or sodium gradient. F-type ATPases consist of two structural domains, F(1) containing the extramembraneous catalytic core and F(0) containing the membrane proton channel, linked together by a central stalk and a peripheral stalk. During catalysis, ATP synthesis in the catalytic domain of F(1) is coupled via a rotary mechanism of the central stalk subunits to proton translocation. This protein is part of the stalk that links CF(0) to CF(1). It either transmits conformational changes from CF(0) to CF(1) or is implicated in proton conduction. The polypeptide is ATP synthase subunit delta (Actinobacillus pleuropneumoniae serotype 7 (strain AP76)).